Consider the following 260-residue polypeptide: Putative methylesterase 19 (260 aa).

Serine 81 acts as the Acyl-ester intermediate in catalysis. Catalysis depends on charge relay system residues aspartate 210 and histidine 238.

The protein belongs to the AB hydrolase superfamily. Methylesterase family.

Putative methylesterase. This Arabidopsis thaliana (Mouse-ear cress) protein is Putative methylesterase 19.